Here is a 168-residue protein sequence, read N- to C-terminus: NAD(P)H-quinone oxidoreductase subunit J, chloroplastic (168 aa).

Belongs to the complex I 30 kDa subunit family. In terms of assembly, NDH is composed of at least 16 different subunits, 5 of which are encoded in the nucleus.

It is found in the plastid. It localises to the chloroplast thylakoid membrane. It catalyses the reaction a plastoquinone + NADH + (n+1) H(+)(in) = a plastoquinol + NAD(+) + n H(+)(out). The catalysed reaction is a plastoquinone + NADPH + (n+1) H(+)(in) = a plastoquinol + NADP(+) + n H(+)(out). Its function is as follows. NDH shuttles electrons from NAD(P)H:plastoquinone, via FMN and iron-sulfur (Fe-S) centers, to quinones in the photosynthetic chain and possibly in a chloroplast respiratory chain. The immediate electron acceptor for the enzyme in this species is believed to be plastoquinone. Couples the redox reaction to proton translocation, and thus conserves the redox energy in a proton gradient. This chain is NAD(P)H-quinone oxidoreductase subunit J, chloroplastic, found in Chaetosphaeridium globosum (Charophycean green alga).